We begin with the raw amino-acid sequence, 355 residues long: Ubiquinone biosynthesis protein COQ4 homolog, mitochondrial (355 aa).

Residues His-134, Asp-135, His-138, and Glu-150 each coordinate Zn(2+).

The protein belongs to the COQ4 family. Component of a multi-subunit COQ enzyme complex. The cofactor is Zn(2+).

The protein localises to the mitochondrion inner membrane. It catalyses the reaction a 4-hydroxy-3-methoxy-5-(all-trans-polyprenyl)benzoate + H(+) = a 2-methoxy-6-(all-trans-polyprenyl)phenol + CO2. It functions in the pathway cofactor biosynthesis; ubiquinone biosynthesis. Lyase that catalyzes the C1-decarboxylation of 4-hydroxy-3-methoxy-5-(all-trans-polyprenyl)benzoic acid into 2-methoxy-6-(all-trans-polyprenyl)phenol during ubiquinone biosynthesis. In Plasmodium knowlesi (strain H), this protein is Ubiquinone biosynthesis protein COQ4 homolog, mitochondrial.